A 554-amino-acid polypeptide reads, in one-letter code: Intraflagellar transport protein 56 (554 aa).

The interval 1 to 23 is disordered; it reads MMLSRAKPAVGNEVQQIDKKKKK. TPR repeat units follow at residues 57–90, 92–125, 151–184, and 468–501; these read EDTELWIGYCSFHLGDYKRSLEVFKALSQQEGCN, DVWVNLACTSFFLGMYKEADEAANKAPKSRLQNR, IEDQLSLASIHYMRSHYQEAIDIYKRILLENRDF, and ANDCYKMGHFYYAAKAFDILERLDPSPEYWEGKR.

It belongs to the IFT56 family. In terms of assembly, component of the IFT complex B.

Its subcellular location is the cell projection. It is found in the cilium. Its function is as follows. Component of the intraflagellar transport (IFT) complex B required for transport of proteins in the motile cilium. Required for transport of specific ciliary cargo proteins related to motility, while it is neither required for IFT complex B assembly or motion nor for cilium assembly. Plays a key role in maintaining the integrity of the IFT complex B and the proper ciliary localization of the IFT complex B components. Essential for maintaining proper microtubule organization within the ciliary axoneme. This is Intraflagellar transport protein 56 from Xenopus tropicalis (Western clawed frog).